Reading from the N-terminus, the 119-residue chain is MAFKDTGKTPVEPEVAIHRIRITLTSRNVKSLEKVCADLIRGAKEKNLKVKGPVRMPTKTLRITTRKTPCGEGSKTWDRFQMRIPKRLIDLHSPSEIVKQITSISIEPGVEVEVTIADA.

Residue A2 is modified to N-acetylalanine. Residue K4 forms a Glycyl lysine isopeptide (Lys-Gly) (interchain with G-Cter in ubiquitin) linkage. K8 bears the N6-succinyllysine; alternate mark. K8 participates in a covalent cross-link: Glycyl lysine isopeptide (Lys-Gly) (interchain with G-Cter in ubiquitin); alternate. T9 carries the phosphothreonine modification. N6-acetyllysine occurs at positions 34 and 75. S93 is subject to Phosphoserine.

This sequence belongs to the universal ribosomal protein uS10 family. As to quaternary structure, component of the 40S small ribosomal subunit. Polyubiquitinated by ZNF598 via 'Lys-63'-linked ubiquitin chains when a ribosome has stalled, initiating the ribosome quality control (RQC) pathway to degrade the potentially detrimental aberrant nascent polypeptide. Deubiquitinated by OTUD3 and USP21, antagonizing ZNF598 activity. Post-translationally, ufmylated by UFL1.

The protein resides in the cytoplasm. Its function is as follows. Component of the small ribosomal subunit. The ribosome is a large ribonucleoprotein complex responsible for the synthesis of proteins in the cell. The chain is Small ribosomal subunit protein uS10 (RPS20) from Sus scrofa (Pig).